A 303-amino-acid chain; its full sequence is UDP-N-acetylenolpyruvoylglucosamine reductase (303 aa).

Residues 30 to 196 (IGGPADLLII…LEAVFKLKQD (167 aa)) form the FAD-binding PCMH-type domain. Residue arginine 174 is part of the active site. Serine 225 functions as the Proton donor in the catalytic mechanism. Glutamate 295 is an active-site residue.

The protein belongs to the MurB family. Requires FAD as cofactor.

It is found in the cytoplasm. The catalysed reaction is UDP-N-acetyl-alpha-D-muramate + NADP(+) = UDP-N-acetyl-3-O-(1-carboxyvinyl)-alpha-D-glucosamine + NADPH + H(+). It functions in the pathway cell wall biogenesis; peptidoglycan biosynthesis. In terms of biological role, cell wall formation. The polypeptide is UDP-N-acetylenolpyruvoylglucosamine reductase (Bacillus pumilus (strain SAFR-032)).